The chain runs to 529 residues: Endoglucanase 21 (529 aa).

Positions 1 to 24 are cleaved as a signal peptide; that stretch reads MVAAMTMCAAVAVLLVLTSTMAAA. Catalysis depends on D89, which acts as the Nucleophile. A glycan (N-linked (GlcNAc...) asparagine) is linked at N342. Active-site residues include H429, D481, and E490.

Belongs to the glycosyl hydrolase 9 (cellulase E) family. Expressed in roots and flowers.

It is found in the secreted. The enzyme catalyses Endohydrolysis of (1-&gt;4)-beta-D-glucosidic linkages in cellulose, lichenin and cereal beta-D-glucans.. The sequence is that of Endoglucanase 21 (GLU9) from Oryza sativa subsp. japonica (Rice).